Here is a 203-residue protein sequence, read N- to C-terminus: Ribosomal RNA small subunit methyltransferase G (203 aa).

Residues glycine 73, leucine 78, 124 to 125, and arginine 139 contribute to the S-adenosyl-L-methionine site; that span reads VE.

It belongs to the methyltransferase superfamily. RNA methyltransferase RsmG family.

It localises to the cytoplasm. The catalysed reaction is guanosine(527) in 16S rRNA + S-adenosyl-L-methionine = N(7)-methylguanosine(527) in 16S rRNA + S-adenosyl-L-homocysteine. Specifically methylates the N7 position of guanine in position 527 of 16S rRNA. In Haemophilus influenzae (strain PittEE), this protein is Ribosomal RNA small subunit methyltransferase G.